Here is a 485-residue protein sequence, read N- to C-terminus: NADH-quinone oxidoreductase subunit N (485 aa).

A run of 14 helical transmembrane segments spans residues 8–28 (LIALLPLLIVGLTVVVVMLSI), 35–55 (FLNATLSVIGLNAALVSLWFV), 71–91 (GFAMLYTGLVLLASLATCTFA), 105–125 (FYLLVLIAALGGILLANANHL), 127–147 (SLFLGIELISLPLFGLVGYAF), 159–179 (YTILSAAASSFLLFGMALVYA), 203–223 (LLAGFGMMIVGLGFKLSLVPF), 235–255 (PAPVSTFLATASKIAIFGVVM), 271–291 (VVLAIIAFASIIFGNLMALSQ), 297–317 (LLGYSSISHLGYLLVALIALQ), 326–346 (VGGYLAGYLFSSLGAFGVVSL), 373–393 (AAVMTVMMLSLAGIPMTLGFI), 408–430 (WWLVGAVVVGSAIGLYYYLRVAV), and 455–475 (IVVLISALLVLVLGVWPQPLI).

This sequence belongs to the complex I subunit 2 family. In terms of assembly, NDH-1 is composed of 13 different subunits. Subunits NuoA, H, J, K, L, M, N constitute the membrane sector of the complex.

The protein localises to the cell inner membrane. It catalyses the reaction a quinone + NADH + 5 H(+)(in) = a quinol + NAD(+) + 4 H(+)(out). NDH-1 shuttles electrons from NADH, via FMN and iron-sulfur (Fe-S) centers, to quinones in the respiratory chain. The immediate electron acceptor for the enzyme in this species is believed to be ubiquinone. Couples the redox reaction to proton translocation (for every two electrons transferred, four hydrogen ions are translocated across the cytoplasmic membrane), and thus conserves the redox energy in a proton gradient. The chain is NADH-quinone oxidoreductase subunit N from Shigella boydii serotype 18 (strain CDC 3083-94 / BS512).